Here is a 500-residue protein sequence, read N- to C-terminus: Lysine--tRNA ligase (500 aa).

Residues D412 and E419 each contribute to the Mg(2+) site.

Belongs to the class-II aminoacyl-tRNA synthetase family. Homodimer. Requires Mg(2+) as cofactor.

Its subcellular location is the cytoplasm. It catalyses the reaction tRNA(Lys) + L-lysine + ATP = L-lysyl-tRNA(Lys) + AMP + diphosphate. The sequence is that of Lysine--tRNA ligase from Kineococcus radiotolerans (strain ATCC BAA-149 / DSM 14245 / SRS30216).